We begin with the raw amino-acid sequence, 191 residues long: Large ribosomal subunit protein bL25 (191 aa).

It belongs to the bacterial ribosomal protein bL25 family. CTC subfamily. In terms of assembly, part of the 50S ribosomal subunit; part of the 5S rRNA/L5/L18/L25 subcomplex. Contacts the 5S rRNA. Binds to the 5S rRNA independently of L5 and L18.

Its function is as follows. This is one of the proteins that binds to the 5S RNA in the ribosome where it forms part of the central protuberance. The chain is Large ribosomal subunit protein bL25 from Nitratidesulfovibrio vulgaris (strain DSM 19637 / Miyazaki F) (Desulfovibrio vulgaris).